We begin with the raw amino-acid sequence, 352 residues long: S-adenosylmethionine:tRNA ribosyltransferase-isomerase (352 aa).

This sequence belongs to the QueA family. Monomer.

It localises to the cytoplasm. The catalysed reaction is 7-aminomethyl-7-carbaguanosine(34) in tRNA + S-adenosyl-L-methionine = epoxyqueuosine(34) in tRNA + adenine + L-methionine + 2 H(+). It functions in the pathway tRNA modification; tRNA-queuosine biosynthesis. Its function is as follows. Transfers and isomerizes the ribose moiety from AdoMet to the 7-aminomethyl group of 7-deazaguanine (preQ1-tRNA) to give epoxyqueuosine (oQ-tRNA). The polypeptide is S-adenosylmethionine:tRNA ribosyltransferase-isomerase (Paraburkholderia xenovorans (strain LB400)).